The chain runs to 75 residues: uncharacterized protein (75 aa).

One can recognise a Glutaredoxin domain in the interval 1–75; that stretch reads MIKIYSTPTC…KAEIDKLIEK (75 aa). Cys10 and Cys13 are disulfide-bonded.

The protein belongs to the glutaredoxin family.

This is an uncharacterized protein from Clostridium pasteurianum.